The sequence spans 118 residues: MARIAGVNIPDNKHAVISLTYIFGIGRTRSRAICAATGVAETAKIGSLSDDVLDELRGEVAKYTVEGDLRREVSMSIKRLMDLGCNRGIRHRRSLPVRGQRTKTNARTRKGPRKPIRK.

Residues His-91–Lys-118 form a disordered region.

Belongs to the universal ribosomal protein uS13 family. Part of the 30S ribosomal subunit. Forms a loose heterodimer with protein S19. Forms two bridges to the 50S subunit in the 70S ribosome.

In terms of biological role, located at the top of the head of the 30S subunit, it contacts several helices of the 16S rRNA. In the 70S ribosome it contacts the 23S rRNA (bridge B1a) and protein L5 of the 50S subunit (bridge B1b), connecting the 2 subunits; these bridges are implicated in subunit movement. Contacts the tRNAs in the A and P-sites. The sequence is that of Small ribosomal subunit protein uS13 from Marinomonas sp. (strain MWYL1).